The following is a 273-amino-acid chain: Large ribosomal subunit protein uL2 (273 aa).

The tract at residues 221-263 is disordered; it reads RGTAMNPVDHPHGGGEGRNFGKHPVTPWGVQTKGKKTRHNKRT. Over residues 253-263 the composition is skewed to basic residues; that stretch reads KGKKTRHNKRT.

The protein belongs to the universal ribosomal protein uL2 family. In terms of assembly, part of the 50S ribosomal subunit. Forms a bridge to the 30S subunit in the 70S ribosome.

Functionally, one of the primary rRNA binding proteins. Required for association of the 30S and 50S subunits to form the 70S ribosome, for tRNA binding and peptide bond formation. It has been suggested to have peptidyltransferase activity; this is somewhat controversial. Makes several contacts with the 16S rRNA in the 70S ribosome. The chain is Large ribosomal subunit protein uL2 from Histophilus somni (strain 129Pt) (Haemophilus somnus).